A 265-amino-acid chain; its full sequence is Undecaprenyl-diphosphatase (265 aa).

Helical transmembrane passes span 1-21, 39-59, 83-103, 114-134, 144-164, 188-208, 218-238, and 244-264; these read MDWF…FLPI, QGLA…MMYY, LKLG…GFLG, ALVI…SDAF, LGVA…IPGT, SFLL…KDLI, MMAL…VFFI, and VGML…LFWL.

Belongs to the UppP family.

It localises to the cell inner membrane. It catalyses the reaction di-trans,octa-cis-undecaprenyl diphosphate + H2O = di-trans,octa-cis-undecaprenyl phosphate + phosphate + H(+). Functionally, catalyzes the dephosphorylation of undecaprenyl diphosphate (UPP). Confers resistance to bacitracin. The polypeptide is Undecaprenyl-diphosphatase (Alcanivorax borkumensis (strain ATCC 700651 / DSM 11573 / NCIMB 13689 / SK2)).